The sequence spans 1035 residues: Enteropeptidase (1035 aa).

Gly-2 carries N-myristoyl glycine lipidation. At 2-18 the chain is on the cytoplasmic side; it reads GSKRSVPSRHRSLTTYE. The chain crosses the membrane as a helical; Signal-anchor for type II membrane protein span at residues 19-47; it reads VMFAVLFVILVALCAGLIAVSWLSIQGSV. At 48–1035 the chain is on the extracellular side; the sequence is KDAAFGKSHE…FTEWIQSFLH (988 aa). An SEA domain is found at 54-169; sequence KSHEARGTLK…NSIDITASLE (116 aa). N-linked (GlcNAc...) asparagine glycosylation is found at Asn-116, Asn-147, Asn-170, and Asn-194. The region spanning 197 to 238 is the LDL-receptor class A 1 domain; it reads IECPPDSRLCADALKCIAIDLFCDGELNCPDGSDEDNKTCAT. Cystine bridges form between Cys-199–Cys-212, Cys-206–Cys-225, Cys-219–Cys-236, and Cys-240–Cys-269. N-linked (GlcNAc...) asparagine glycans are attached at residues Asn-233, Asn-263, Asn-264, Asn-404, Asn-456, Asn-486, Asn-519, Asn-550, and Asn-646. The region spanning 240–350 is the CUB 1 domain; sequence CDGRFLLTGS…IGFKVTYTAF (111 aa). The region spanning 358–520 is the MAM domain; that stretch reads YEKINCNFED…ISLTYGICNV (163 aa). Cys-540 and Cys-568 are oxidised to a cystine. The 111-residue stretch at 540–650 folds into the CUB 2 domain; the sequence is CGGPHDLWEP…QGFKANFTTG (111 aa). The LDL-receptor class A 2 domain occupies 657-695; the sequence is EPCKEDNFQCKDGECIPLVNLCDGFPHCKDGSDEAHCVR. 3 cysteine pairs are disulfide-bonded: Cys-659–Cys-671, Cys-666–Cys-684, and Cys-678–Cys-693. The region spanning 694-787 is the SRCR domain; sequence VRLFNGTTDS…LILLQCNYKS (94 aa). N-linked (GlcNAc...) asparagine glycans are attached at residues Asn-698, Asn-722, Asn-741, and Asn-762. 6 disulfides stabilise this stretch: Cys-773-Cys-783, Cys-788-Cys-912, Cys-826-Cys-842, Cys-926-Cys-993, Cys-957-Cys-972, and Cys-983-Cys-1011. The Peptidase S1 domain maps to 801–1035; the sequence is IVGGSDSREG…FTEWIQSFLH (235 aa). His-841 functions as the Charge relay system in the catalytic mechanism. The N-linked (GlcNAc...) asparagine glycan is linked to Asn-864. Asp-892 serves as the catalytic Charge relay system. N-linked (GlcNAc...) asparagine glycans are attached at residues Asn-903 and Asn-965. Ser-987 functions as the Charge relay system in the catalytic mechanism.

It belongs to the peptidase S1 family. As to quaternary structure, heterodimer of a catalytic (light) chain and a multidomain (heavy) chain linked by a disulfide bond. In terms of processing, the chains are derived from a single precursor that is cleaved by a trypsin-like protease. In terms of tissue distribution, intestinal brush border.

The protein resides in the membrane. It carries out the reaction Activation of trypsinogen by selective cleavage of 6-Lys-|-Ile-7 bond.. Functionally, responsible for initiating activation of pancreatic proteolytic proenzymes (trypsin, chymotrypsin and carboxypeptidase A). It catalyzes the conversion of trypsinogen to trypsin which in turn activates other proenzymes including chymotrypsinogen, procarboxypeptidases, and proelastases. In Bos taurus (Bovine), this protein is Enteropeptidase (TMPRSS15).